A 599-amino-acid polypeptide reads, in one-letter code: Adenine deaminase (599 aa).

It belongs to the metallo-dependent hydrolases superfamily. Adenine deaminase family. Mn(2+) serves as cofactor.

The catalysed reaction is adenine + H2O + H(+) = hypoxanthine + NH4(+). In Clostridium botulinum (strain Langeland / NCTC 10281 / Type F), this protein is Adenine deaminase.